Here is a 423-residue protein sequence, read N- to C-terminus: MLLKVRKSKASGNVRIPGSKSHTIRALFFASLAEGKSEIQSPLISDDALSAVEVCRALGAKIEKEDDKYVVEGFGGNPEVPEDVINVGNSGTTLRFGIMTAALGDGCSVFTGDRQIRQRPLGPLLCAINNLGAEAFSTRNNGRAPVVVKGKLKGGRTEIDSVTSQYLSSILINSPLIPLDTEVIVTRLNEVPYVDMTLWWLDKLGIKYENHDYKTFYIKGGQRYRPLNVTIPGDFSSATFFAVQAAISGEEFVLDNLDMTDPQGDKMVFSILEDMGAKVKVEGKSVRIKGCELVGREIDMNAIPDALPAMAVAGCFAKGETKLLNVPQARIKETDRIHVMCEQLKKMGADITELEDGLVIRESRLKGCKLEGYGDHRVVMSLAIAGLNAEGETVIDTAEAVNVTFPDFVNFLSRCGADISTCE.

3-phosphoshikimate contacts are provided by Lys20, Ser21, and Arg25. Lys20 serves as a coordination point for phosphoenolpyruvate. Positions 91 and 119 each coordinate phosphoenolpyruvate. Residues Thr163, Ser164, Gln165, Asp305, Gln328, and Lys332 each contribute to the 3-phosphoshikimate site. Gln165 serves as a coordination point for phosphoenolpyruvate. Asp305 (proton acceptor) is an active-site residue. Positions 336 and 377 each coordinate phosphoenolpyruvate.

Belongs to the EPSP synthase family. As to quaternary structure, monomer.

It is found in the cytoplasm. The enzyme catalyses 3-phosphoshikimate + phosphoenolpyruvate = 5-O-(1-carboxyvinyl)-3-phosphoshikimate + phosphate. It participates in metabolic intermediate biosynthesis; chorismate biosynthesis; chorismate from D-erythrose 4-phosphate and phosphoenolpyruvate: step 6/7. Its function is as follows. Catalyzes the transfer of the enolpyruvyl moiety of phosphoenolpyruvate (PEP) to the 5-hydroxyl of shikimate-3-phosphate (S3P) to produce enolpyruvyl shikimate-3-phosphate and inorganic phosphate. This is 3-phosphoshikimate 1-carboxyvinyltransferase from Acetivibrio thermocellus (strain ATCC 27405 / DSM 1237 / JCM 9322 / NBRC 103400 / NCIMB 10682 / NRRL B-4536 / VPI 7372) (Clostridium thermocellum).